Consider the following 492-residue polypeptide: Aspartate aminotransferase (492 aa).

The N-terminal 66 residues, 1-66 (MMSASFKCPV…KGSCCLFNIR (66 aa)), are a transit peptide targeting the chloroplast. Residues Gly-119, Trp-206, and Asn-256 each contribute to the L-aspartate site. The residue at position 319 (Lys-319) is an N6-(pyridoxal phosphate)lysine. Residue Arg-458 coordinates L-aspartate.

Belongs to the class-I pyridoxal-phosphate-dependent aminotransferase family. In terms of assembly, homodimer. Pyridoxal 5'-phosphate serves as cofactor.

It localises to the plastid. Its subcellular location is the chloroplast. It carries out the reaction L-aspartate + 2-oxoglutarate = oxaloacetate + L-glutamate. Its function is as follows. Prokaryotic-type aspartate aminotransferase. Specific for aspartate and no activity with glutamine, asparagine, alanine, histidine, leucine, methionine, lysine, arginine, tryptophan, tyrosine, phenylalanine or kynurenine. This chain is Aspartate aminotransferase (AAT), found in Pinus pinaster (Maritime pine).